The sequence spans 63 residues: Sperm protamine P1 (63 aa).

Residues 1-47 (MARCRRHIRSRSRSRNQCQRRRRRSHYNRRRTYRRSRRHSRRRRVRR) are disordered.

Belongs to the protamine P1 family. As to expression, testis.

The protein resides in the nucleus. The protein localises to the chromosome. In terms of biological role, protamines substitute for histones in the chromatin of sperm during the haploid phase of spermatogenesis. They compact sperm DNA into a highly condensed, stable and inactive complex. In Planigale tenuirostris (Narrow-nosed planigale), this protein is Sperm protamine P1 (PRM1).